We begin with the raw amino-acid sequence, 100 residues long: Small ribosomal subunit protein uS14 (100 aa).

Belongs to the universal ribosomal protein uS14 family. In terms of assembly, part of the 30S ribosomal subunit. Contacts proteins S3 and S10.

Binds 16S rRNA, required for the assembly of 30S particles and may also be responsible for determining the conformation of the 16S rRNA at the A site. The chain is Small ribosomal subunit protein uS14 from Parasynechococcus marenigrum (strain WH8102).